The following is a 635-amino-acid chain: Cationic amino acid transporter 4 (635 aa).

Transmembrane regions (helical) follow at residues 42–62 (LTLL…TGTV), 66–86 (MAGP…LLAA), and 113–133 (IWAF…GAAV). N-linked (GlcNAc...) asparagine glycans are attached at residues N146, N151, and N195. A helical membrane pass occupies residues 197-217 (TFSAISLIVILFIIVLGFILA). Residue N221 is glycosylated (N-linked (GlcNAc...) asparagine). A run of 5 helical transmembrane segments spans residues 229–249 (FAPF…YAFV), 270–290 (MAIA…STVL), 318–338 (GFIV…SNLF), 365–385 (QVPV…ALLL), and 391–411 (VQFL…SIIV). 2 positions are modified to phosphoserine: S422 and S427. The next 4 helical transmembrane spans lie at 478–498 (VAWA…VLVF), 508–528 (WGYV…LLVL), 539–559 (TFQI…NTCL), and 567–587 (TWLR…GYGI).

It belongs to the amino acid-polyamine-organocation (APC) superfamily. Cationic amino acid transporter (CAT) (TC 2.A.3.3) family.

The protein resides in the membrane. In terms of biological role, involved in the transport of the cationic amino acids (arginine, lysine and ornithine). In Mus musculus (Mouse), this protein is Cationic amino acid transporter 4 (Slc7a4).